Consider the following 301-residue polypeptide: E3 ubiquitin-protein ligase DIS1 (301 aa).

The RING-type; degenerate zinc finger occupies 53–89; sequence CPVCLSAMYPPIHQCSNGHTLCSGCKPRVHNRCPTCR. The SIAH-type; degenerate zinc-finger motif lies at 106 to 166; the sequence is SLELPCKYQN…LVNHLKDDHK (61 aa).

It belongs to the SINA (Seven in absentia) family. As to quaternary structure, homodimer. Interacts with NEK6. Interacts with SKIPA.

It is found in the nucleus. The protein resides in the cytoplasm. It carries out the reaction S-ubiquitinyl-[E2 ubiquitin-conjugating enzyme]-L-cysteine + [acceptor protein]-L-lysine = [E2 ubiquitin-conjugating enzyme]-L-cysteine + N(6)-ubiquitinyl-[acceptor protein]-L-lysine.. The protein operates within protein modification; protein ubiquitination. Functionally, E3 ubiquitin-protein ligase that mediates ubiquitination and subsequent proteasomal degradation of target proteins. E3 ubiquitin ligases accept ubiquitin from an E2 ubiquitin-conjugating enzyme in the form of a thioester and then directly transfers the ubiquitin to targeted substrates. Plays a negative role in drought stress tolerance through transcriptional and post-translational regulation of diverse stress-related genes. Interacts with the serine/threonine-protein kinase NEK6 and promotes its degradation via the 26S proteasome-dependent pathway. The sequence is that of E3 ubiquitin-protein ligase DIS1 from Oryza sativa subsp. japonica (Rice).